The chain runs to 160 residues: Cyclic pyranopterin monophosphate synthase (160 aa).

Residues 77–79 (LCH) and 114–115 (ME) contribute to the substrate site. The active site involves Asp129.

This sequence belongs to the MoaC family. As to quaternary structure, homohexamer; trimer of dimers.

The enzyme catalyses (8S)-3',8-cyclo-7,8-dihydroguanosine 5'-triphosphate = cyclic pyranopterin phosphate + diphosphate. It participates in cofactor biosynthesis; molybdopterin biosynthesis. Catalyzes the conversion of (8S)-3',8-cyclo-7,8-dihydroguanosine 5'-triphosphate to cyclic pyranopterin monophosphate (cPMP). The polypeptide is Cyclic pyranopterin monophosphate synthase (Alcanivorax borkumensis (strain ATCC 700651 / DSM 11573 / NCIMB 13689 / SK2)).